We begin with the raw amino-acid sequence, 1269 residues long: Protein CFT1 (1269 aa).

Residues 393–427 (PESQPEETLDDGNESDDDLYGGDTAQTEDTTNRPL) are disordered. Residues 395-412 (SQPEETLDDGNESDDDLY) show a composition bias toward acidic residues. Polar residues predominate over residues 416–425 (TAQTEDTTNR).

The protein belongs to the CFT1 family.

The protein resides in the nucleus. Functionally, RNA-binding component of the cleavage and polyadenylation factor (CPF) complex, which plays a key role in polyadenylation-dependent pre-mRNA 3'-end formation and cooperates with cleavage factors including the CFIA complex and NAB4/CFIB. Involved in poly(A) site recognition. May be involved in coupling transcription termination and mRNA 3'-end formation. The polypeptide is Protein CFT1 (CFT1) (Yarrowia lipolytica (strain CLIB 122 / E 150) (Yeast)).